A 200-amino-acid polypeptide reads, in one-letter code: uncharacterized protein (200 aa).

This is an uncharacterized protein from Xylella fastidiosa (strain 9a5c).